The following is a 406-amino-acid chain: Ribose-phosphate pyrophosphokinase 3, mitochondrial (406 aa).

Positions 1–32 (MAATPHRHLLQPCKNPAISSSETLKPSSSFSL) are disordered. A mitochondrion-targeting transit peptide spans 1 to 87 (MAATPHRHLL…RRFQMSSNQE (87 aa)). Low complexity predominate over residues 18–32 (ISSSETLKPSSSFSL). Mg(2+)-binding residues include aspartate 226 and histidine 228. Residues 309-324 (GRHVVIVDDLVQSGGT) form a binding of phosphoribosylpyrophosphate region.

Belongs to the ribose-phosphate pyrophosphokinase family.

It localises to the mitochondrion. It carries out the reaction D-ribose 5-phosphate + ATP = 5-phospho-alpha-D-ribose 1-diphosphate + AMP + H(+). The chain is Ribose-phosphate pyrophosphokinase 3, mitochondrial (PRS3) from Spinacia oleracea (Spinach).